The sequence spans 398 residues: Dual-specificity RNA methyltransferase RlmN (398 aa).

Residue Glu-119 is the Proton acceptor of the active site. A Radical SAM core domain is found at 125 to 364; sequence EEERATLCVS…TIVRKTRGDD (240 aa). Cysteines 132 and 369 form a disulfide. [4Fe-4S] cluster is bound by residues Cys-139, Cys-143, and Cys-146. Residues 193–194, Ser-225, 247–249, and Asn-326 each bind S-adenosyl-L-methionine; these read GE and SLH. The S-methylcysteine intermediate role is filled by Cys-369.

This sequence belongs to the radical SAM superfamily. RlmN family. [4Fe-4S] cluster is required as a cofactor.

The protein localises to the cytoplasm. It catalyses the reaction adenosine(2503) in 23S rRNA + 2 reduced [2Fe-2S]-[ferredoxin] + 2 S-adenosyl-L-methionine = 2-methyladenosine(2503) in 23S rRNA + 5'-deoxyadenosine + L-methionine + 2 oxidized [2Fe-2S]-[ferredoxin] + S-adenosyl-L-homocysteine. The catalysed reaction is adenosine(37) in tRNA + 2 reduced [2Fe-2S]-[ferredoxin] + 2 S-adenosyl-L-methionine = 2-methyladenosine(37) in tRNA + 5'-deoxyadenosine + L-methionine + 2 oxidized [2Fe-2S]-[ferredoxin] + S-adenosyl-L-homocysteine. Specifically methylates position 2 of adenine 2503 in 23S rRNA and position 2 of adenine 37 in tRNAs. m2A2503 modification seems to play a crucial role in the proofreading step occurring at the peptidyl transferase center and thus would serve to optimize ribosomal fidelity. The protein is Dual-specificity RNA methyltransferase RlmN of Pectobacterium atrosepticum (strain SCRI 1043 / ATCC BAA-672) (Erwinia carotovora subsp. atroseptica).